Consider the following 450-residue polypeptide: tRNA modification GTPase MnmE (450 aa).

Arginine 25, glutamate 86, and arginine 126 together coordinate (6S)-5-formyl-5,6,7,8-tetrahydrofolate. In terms of domain architecture, TrmE-type G spans glycine 221–glycine 373. Asparagine 231 is a K(+) binding site. GTP contacts are provided by residues asparagine 231–serine 236, threonine 250–threonine 256, aspartate 275–glycine 278, and asparagine 336–aspartate 339. A Mg(2+)-binding site is contributed by serine 235. 3 residues coordinate K(+): threonine 250, leucine 252, and threonine 255. Threonine 256 is a binding site for Mg(2+). Position 450 (lysine 450) interacts with (6S)-5-formyl-5,6,7,8-tetrahydrofolate.

Belongs to the TRAFAC class TrmE-Era-EngA-EngB-Septin-like GTPase superfamily. TrmE GTPase family. As to quaternary structure, homodimer. Heterotetramer of two MnmE and two MnmG subunits. It depends on K(+) as a cofactor.

The protein localises to the cytoplasm. Functionally, exhibits a very high intrinsic GTPase hydrolysis rate. Involved in the addition of a carboxymethylaminomethyl (cmnm) group at the wobble position (U34) of certain tRNAs, forming tRNA-cmnm(5)s(2)U34. The chain is tRNA modification GTPase MnmE from Synechococcus sp. (strain CC9605).